The sequence spans 529 residues: Tyrosinase (529 aa).

The signal sequence occupies residues 1–18 (MLLAVLYCLLWSFQTSAG). Over 19–476 (HFPRACVSSK…YLEQASRIWS (458 aa)) the chain is Lumenal, melanosome. N-linked (GlcNAc...) asparagine glycans are attached at residues Asn86, Asn111, and Asn161. 3 residues coordinate Cu cation: His180, His202, and His211. N-linked (GlcNAc...) asparagine glycosylation is present at Asn230. A disordered region spans residues 287-313 (SLCNGTPEGPLQRNPGNHDKSRTPRLP). A glycan (N-linked (GlcNAc...) asparagine) is linked at Asn337. Cu cation is bound by residues His363 and His367. Asn371 is a glycosylation site (N-linked (GlcNAc...) asparagine). His390 contributes to the Cu cation binding site. Residues 477–497 (WLLGAAMVGAVLTALLAGLVS) form a helical membrane-spanning segment. Residues 498–529 (LLCRHKRKQLPEEKQPLLMEKEDYHSLYQSHL) are Cytoplasmic-facing.

This sequence belongs to the tyrosinase family. In terms of assembly, forms an OPN3-dependent complex with DCT in response to blue light in melanocytes. Requires Cu(2+) as cofactor. Glycosylated.

It is found in the melanosome membrane. The protein localises to the melanosome. It carries out the reaction 2 L-dopa + O2 = 2 L-dopaquinone + 2 H2O. The enzyme catalyses L-tyrosine + O2 = L-dopaquinone + H2O. The catalysed reaction is 2 5,6-dihydroxyindole-2-carboxylate + O2 = 2 indole-5,6-quinone-2-carboxylate + 2 H2O. Functionally, this is a copper-containing oxidase that functions in the formation of pigments such as melanins and other polyphenolic compounds. Catalyzes the initial and rate limiting step in the cascade of reactions leading to melanin production from tyrosine. In addition to hydroxylating tyrosine to DOPA (3,4-dihydroxyphenylalanine), also catalyzes the oxidation of DOPA to DOPA-quinone, and possibly the oxidation of DHI (5,6-dihydroxyindole) to indole-5,6 quinone. The protein is Tyrosinase (TYR) of Gorilla gorilla gorilla (Western lowland gorilla).